The chain runs to 212 residues: Peptide methionine sulfoxide reductase MsrA (212 aa).

Residue cysteine 52 is part of the active site.

Belongs to the MsrA Met sulfoxide reductase family.

It catalyses the reaction L-methionyl-[protein] + [thioredoxin]-disulfide + H2O = L-methionyl-(S)-S-oxide-[protein] + [thioredoxin]-dithiol. The catalysed reaction is [thioredoxin]-disulfide + L-methionine + H2O = L-methionine (S)-S-oxide + [thioredoxin]-dithiol. Its function is as follows. Has an important function as a repair enzyme for proteins that have been inactivated by oxidation. Catalyzes the reversible oxidation-reduction of methionine sulfoxide in proteins to methionine. The protein is Peptide methionine sulfoxide reductase MsrA of Salmonella agona (strain SL483).